Here is a 648-residue protein sequence, read N- to C-terminus: Acetyl-coenzyme A synthetase (648 aa).

Residues 191–194, threonine 310, and asparagine 334 each bind CoA; that span reads RGGR. ATP is bound by residues 386–388, 410–415, aspartate 499, and arginine 514; these read GEP and DTWWQT. Serine 522 contributes to the CoA binding site. Arginine 525 lines the ATP pocket. 3 residues coordinate Mg(2+): valine 536, histidine 538, and isoleucine 541. Arginine 583 serves as a coordination point for CoA. The residue at position 608 (lysine 608) is an N6-acetyllysine.

The protein belongs to the ATP-dependent AMP-binding enzyme family. It depends on Mg(2+) as a cofactor. Acetylated. Deacetylation by the SIR2-homolog deacetylase activates the enzyme.

It catalyses the reaction acetate + ATP + CoA = acetyl-CoA + AMP + diphosphate. Its function is as follows. Catalyzes the conversion of acetate into acetyl-CoA (AcCoA), an essential intermediate at the junction of anabolic and catabolic pathways. AcsA undergoes a two-step reaction. In the first half reaction, AcsA combines acetate with ATP to form acetyl-adenylate (AcAMP) intermediate. In the second half reaction, it can then transfer the acetyl group from AcAMP to the sulfhydryl group of CoA, forming the product AcCoA. In Aeromonas salmonicida (strain A449), this protein is Acetyl-coenzyme A synthetase.